Consider the following 669-residue polypeptide: Probable pectinesterase/pectinesterase inhibitor 21 (669 aa).

Residues 16 to 36 (IVITISSVLLISMVVAVTVGV) traverse the membrane as a helical segment. Residues Asn52, Asn81, Asn94, Asn281, and Asn300 are each glycosylated (N-linked (GlcNAc...) asparagine). Residues 52-205 (NASVKAVKDV…IELTHNGLAI (154 aa)) are pectinesterase inhibitor 21. The pectinesterase 21 stretch occupies residues 255–551 (DIVVAQDGSG…FTPAQYIQGD (297 aa)). 2 residues coordinate substrate: Thr330 and Gln360. Catalysis depends on Asp383, which acts as the Proton donor; for pectinesterase activity. Cys397 and Cys417 are joined by a disulfide. Asp404 acts as the Nucleophile; for pectinesterase activity in catalysis. Asn416 is a glycosylation site (N-linked (GlcNAc...) asparagine). The substrate site is built by Arg472 and Trp474. The tract at residues 615–669 (AYTGTASPESSIKVSSSTETASPESSFTEASTASPESSIMVASTESSGSFFSMFT) is disordered. The segment covering 616–628 (YTGTASPESSIKV) has biased composition (polar residues). Residues 629–652 (SSSTETASPESSFTEASTASPESS) show a composition bias toward low complexity. Residues 654–669 (MVASTESSGSFFSMFT) are compositionally biased toward polar residues.

It in the N-terminal section; belongs to the PMEI family. This sequence in the C-terminal section; belongs to the pectinesterase family. In terms of tissue distribution, expressed in flower buds.

The protein localises to the membrane. The enzyme catalyses [(1-&gt;4)-alpha-D-galacturonosyl methyl ester](n) + n H2O = [(1-&gt;4)-alpha-D-galacturonosyl](n) + n methanol + n H(+). It participates in glycan metabolism; pectin degradation; 2-dehydro-3-deoxy-D-gluconate from pectin: step 1/5. In terms of biological role, acts in the modification of cell walls via demethylesterification of cell wall pectin. This Arabidopsis thaliana (Mouse-ear cress) protein is Probable pectinesterase/pectinesterase inhibitor 21 (PME21).